A 540-amino-acid chain; its full sequence is Cytochrome P450 monooxygenase ORF5 (540 aa).

Residues 48–68 (YHALGTAIALFACACAYALVA) form a helical membrane-spanning segment. 2 N-linked (GlcNAc...) asparagine glycosylation sites follow: Asn-376 and Asn-460. Cys-483 provides a ligand contact to heme.

It belongs to the cytochrome P450 family. The cofactor is heme.

It is found in the membrane. Its pathway is sesquiterpene biosynthesis. Cytochrome P450 monooxygenase; part of the gene cluster that mediates the biosynthesis of PR-toxin, a bicyclic sesquiterpene belonging to the eremophilane class and acting as a mycotoxin. The first step of the pathway is catalyzed by the aristolochene synthase which performs the cyclization of trans,trans-farnesyl diphosphate (FPP) to the bicyclic sesquiterpene aristolochene. Following the formation of aristolochene, the non-oxygenated aristolochene is converted to the trioxygenated intermediate eremofortin B, via 7-epi-neopetasone. This conversion appears to involve three enzymes, a hydroxysterol oxidase-like enzyme, the quinone-oxidase prx3 that forms the quinone-type-structure in the bicyclic nucleus of aristolochene with the C8-oxo group and the C-3 hydroxyl group, and the P450 monooxygenase ORF6 that introduces the epoxide at the double bond between carbons 1 and 2. No monoxy or dioxy-intermediates have been reported to be released to the broth, so these three early oxidative reactions may be coupled together. Eremofortin B is further oxidized by another P450 monooxygenase, that introduces a second epoxide between carbons 7 and 11 prior to acetylation to eremofortin A by the acetyltransferase ORF8. The second epoxidation may be performed by a second P450 monooxygenase. After the acetylation step, eremofortin A is converted to eremofortin C and then to PR-toxin. First the conversion of eremofortin A to eremofortin C proceeds by oxidation of the side chain of the molecule at C-12 and is catalyzed by the short-chain oxidoreductase prx1. The cytochrome P450 monooxygenase ORF6 is probably also involved in this step. The primary alcohol formed at C-12 is finally oxidized by the short-chain alcohol dehydrogenase prx4 that forms PR-toxin. This Penicillium roqueforti (strain FM164) protein is Cytochrome P450 monooxygenase ORF5.